The following is a 776-amino-acid chain: DNA ligase (776 aa).

Residues 31–35 (DAEYD), 80–81 (SL), and Glu-112 each bind NAD(+). Lys-114 (N6-AMP-lysine intermediate) is an active-site residue. Positions 135, 172, 288, and 312 each coordinate NAD(+). Zn(2+)-binding residues include Cys-406, Cys-409, Cys-436, and Cys-442. A BRCT domain is found at 693–776 (AEGLPLAGQT…TFLAEQGIAV (84 aa)).

This sequence belongs to the NAD-dependent DNA ligase family. LigA subfamily. Requires Mg(2+) as cofactor. It depends on Mn(2+) as a cofactor.

It catalyses the reaction NAD(+) + (deoxyribonucleotide)n-3'-hydroxyl + 5'-phospho-(deoxyribonucleotide)m = (deoxyribonucleotide)n+m + AMP + beta-nicotinamide D-nucleotide.. Its function is as follows. DNA ligase that catalyzes the formation of phosphodiester linkages between 5'-phosphoryl and 3'-hydroxyl groups in double-stranded DNA using NAD as a coenzyme and as the energy source for the reaction. It is essential for DNA replication and repair of damaged DNA. The chain is DNA ligase from Pseudomonas putida (strain ATCC 700007 / DSM 6899 / JCM 31910 / BCRC 17059 / LMG 24140 / F1).